We begin with the raw amino-acid sequence, 362 residues long: MAQIFNFSSGPAMLPAEVLKQAQQELRDWNGLGTSVMEVSHRGKEFIQVAEEAEKDFRDLLNVPSNYKVLFCHGGGRGQFAAVPLNILGDKTTADYVDAGYWAASAIKEAKKYCTPNVFDAKVTVDGFRAVKPMSEWQLSDNAAYMHYCPNETIDGIAIDETPNFGKDVVVAADFSSTILSRPIDVSRYGVIYAGAQKNIGPAGLTIVIVREDLLGKANIACPSILDYSILNDNDSMFNTPPTFAWYLSGLVFKWLKANGGVVAMDKINQQKAELLYGVIDNSDFYRNDVAKANRSRMNVPFQLADSALDKLFLEESFAAGLHALKGHRVVGGMRASIYNAMPLEGVKALTDFMVEFERRHG.

Residues Ser9 and Arg42 each contribute to the L-glutamate site. Pyridoxal 5'-phosphate contacts are provided by residues 76-77 (GR), Trp102, Thr153, Asp174, and Gln197. The residue at position 198 (Lys198) is an N6-(pyridoxal phosphate)lysine. A pyridoxal 5'-phosphate-binding site is contributed by 239–240 (NT).

It belongs to the class-V pyridoxal-phosphate-dependent aminotransferase family. SerC subfamily. As to quaternary structure, homodimer. The cofactor is pyridoxal 5'-phosphate.

The protein localises to the cytoplasm. It carries out the reaction O-phospho-L-serine + 2-oxoglutarate = 3-phosphooxypyruvate + L-glutamate. The enzyme catalyses 4-(phosphooxy)-L-threonine + 2-oxoglutarate = (R)-3-hydroxy-2-oxo-4-phosphooxybutanoate + L-glutamate. It participates in amino-acid biosynthesis; L-serine biosynthesis; L-serine from 3-phospho-D-glycerate: step 2/3. The protein operates within cofactor biosynthesis; pyridoxine 5'-phosphate biosynthesis; pyridoxine 5'-phosphate from D-erythrose 4-phosphate: step 3/5. In terms of biological role, catalyzes the reversible conversion of 3-phosphohydroxypyruvate to phosphoserine and of 3-hydroxy-2-oxo-4-phosphonooxybutanoate to phosphohydroxythreonine. The polypeptide is Phosphoserine aminotransferase (Escherichia coli O127:H6 (strain E2348/69 / EPEC)).